Consider the following 497-residue polypeptide: Probable cytosol aminopeptidase (497 aa).

The Mn(2+) site is built by Lys-263 and Asp-268. Lys-275 is a catalytic residue. 3 residues coordinate Mn(2+): Asp-286, Asp-345, and Glu-347. Arg-349 is a catalytic residue.

The protein belongs to the peptidase M17 family. Requires Mn(2+) as cofactor.

It localises to the cytoplasm. It catalyses the reaction Release of an N-terminal amino acid, Xaa-|-Yaa-, in which Xaa is preferably Leu, but may be other amino acids including Pro although not Arg or Lys, and Yaa may be Pro. Amino acid amides and methyl esters are also readily hydrolyzed, but rates on arylamides are exceedingly low.. It carries out the reaction Release of an N-terminal amino acid, preferentially leucine, but not glutamic or aspartic acids.. Functionally, presumably involved in the processing and regular turnover of intracellular proteins. Catalyzes the removal of unsubstituted N-terminal amino acids from various peptides. In Rhizobium meliloti (strain 1021) (Ensifer meliloti), this protein is Probable cytosol aminopeptidase.